A 565-amino-acid polypeptide reads, in one-letter code: NAD-dependent malic enzyme (565 aa).

Tyrosine 104 (proton donor) is an active-site residue. Position 157 (arginine 157) interacts with NAD(+). The Proton acceptor role is filled by lysine 175. Positions 246, 247, and 270 each coordinate a divalent metal cation. Residues aspartate 270 and asparagine 418 each coordinate NAD(+).

This sequence belongs to the malic enzymes family. Homotetramer. Requires Mg(2+) as cofactor. Mn(2+) serves as cofactor.

It catalyses the reaction (S)-malate + NAD(+) = pyruvate + CO2 + NADH. It carries out the reaction oxaloacetate + H(+) = pyruvate + CO2. This chain is NAD-dependent malic enzyme, found in Escherichia coli O6:H1 (strain CFT073 / ATCC 700928 / UPEC).